The following is a 333-amino-acid chain: Homeobox protein Hox-A1 (333 aa).

Residues 61–82 (ITSPHHHHHHHHHPQPATYQTS) are disordered. Residues 64–74 (PHHHHHHHHHP) are compositionally biased toward basic residues. Residues 74-202 (PQPATYQTSG…PASETSSPAQ (129 aa)) are interaction with OGT. T152 carries O-linked (GlcNAc) threonine glycosylation. The Antp-type hexapeptide signature appears at 203–208 (TFDWMK). The homeobox DNA-binding region spans 227–286 (QPNAVRTNFTTKQLTELEKEFHFNKYLTRARSEIAASLQLNETQVKIWFQNRRMKQKKRE). The tract at residues 279-333 (RMKQKKREKEGLLPMSPATPPGSDEKTEESSEKSSSSPSAPSPASSTSDTLTTSH) is disordered. Basic and acidic residues predominate over residues 301-310 (SDEKTEESSE). Residues 311 to 333 (KSSSSPSAPSPASSTSDTLTTSH) show a composition bias toward low complexity.

The protein belongs to the Antp homeobox family. Labial subfamily. As to quaternary structure, interacts with OGT (via TPR repeats domain); the interaction takes place mainly in the nucleus. Forms a DNA-binding heterodimer with transcription factor PBX1. Post-translationally, glycosylated by OGT.

It localises to the nucleus. Functionally, sequence-specific transcription factor. Regulates multiple developmental processes including brainstem, inner and outer ear, abducens nerve and cardiovascular development and morphogenesis as well as cognition and behavior. Also part of a developmental regulatory system that provides cells with specific positional identities on the anterior-posterior axis. Acts on the anterior body structures. Seems to act in the maintenance and/or generation of hindbrain segments. Activates transcription in the presence of PBX1A and PKNOX1. The sequence is that of Homeobox protein Hox-A1 (Hoxa1) from Rattus norvegicus (Rat).